The primary structure comprises 551 residues: Tetrachloroethene reductive dehalogenase (551 aa).

The tat-type signal signal peptide spans 1 to 39 (MGEINRRNFLKVSILGAAAAAVASASAVKGMVSPLVADA). One can recognise a 4Fe-4S ferredoxin-type 1 domain in the interval 411–440 (PRKFGVREFCRLCKKCADACPAQAISHEKD). Cys-420, Cys-423, Cys-426, Cys-430, Cys-467, Cys-478, Cys-481, and Cys-485 together coordinate [4Fe-4S] cluster. Positions 478–496 (CSNCVAVCSWNKVETWNHD) constitute a 4Fe-4S ferredoxin-type 2 domain.

This sequence belongs to the PceA family. It depends on [4Fe-4S] cluster as a cofactor. Corrinoid is required as a cofactor. Post-translationally, predicted to be exported by the Tat system. The position of the signal peptide cleavage has been experimentally proven.

The protein resides in the cytoplasm. It is found in the cell membrane. Its subcellular location is the secreted. It carries out the reaction trichloroethene + chloride + A + H(+) = tetrachloroethene + AH2. The catalysed reaction is trichloroethene + AH2 = (Z)-1,2-dichloroethene + chloride + A + H(+). With respect to regulation, pceT is required as a chaperone for prePceA maturation. In the absence or presence of exogenous vitamin B12, the intracellular corrinoid level decreases in fumarate-grown cells and the PceA precursor forms catalytically inactive, corrinoid-free multiprotein aggregates. Exogenous vitamin B12 is not incorporated into the PceA precursor, even though it affects the transposition of the pce gene cluster. Functionally, catalyzes the reductive dechlorination of tetrachloroethene (PCE) to trichloroethene (TCE) and of trichloroethene to cis-1,2-dichloroethene (DCE). Can also use various chlorinated ethanes such as tetrachloroethane, pentachloroethane and hexachloroethane. Reduced methyl viologen can act as the artificial electron donor. This is Tetrachloroethene reductive dehalogenase from Desulfitobacterium hafniense (strain Y51).